Reading from the N-terminus, the 257-residue chain is Discoidin-2 (257 aa).

The segment at 1–155 is beta-sandwich; that stretch reads MSVPAGSVSC…SLRWELYALP (155 aa). An F5/8 type C domain is found at 10–154; the sequence is CLANALLNLR…ISLRWELYAL (145 aa). 3 residues coordinate Ca(2+): N39, S40, and D47. Residues 81-83 carry the Cell attachment site motif; sequence RGD. A Phosphohistidine modification is found at H84. The interval 156 to 162 is linker; that stretch reads VKSYSNP. The segment at 163–257 is lectin-like; the sequence is SVQVGEVSIG…FDYVAVEFNN (95 aa). Positions 209, 218, and 238 each coordinate a carbohydrate.

In terms of assembly, homotrimer. In terms of processing, the N-terminus is blocked. In terms of tissue distribution, maturing spore cells.

Its function is as follows. Galactose-binding lectin. May be necessary for the primary process of spore formation and may be involved in spore coat formation. The protein is Discoidin-2 (dscE) of Dictyostelium discoideum (Social amoeba).